We begin with the raw amino-acid sequence, 64 residues long: MECVCVDSSWPQWLRNLILGILISSILFILTKTQDTVAVYHEPSVYSIDQTQKFQKIDIHNGGK.

Over 1 to 12 (MECVCVDSSWPQ) the chain is Cytoplasmic. A helical; Signal-anchor for type II membrane protein transmembrane segment spans residues 13-30 (WLRNLILGILISSILFIL). The Lumenal segment spans residues 31-64 (TKTQDTVAVYHEPSVYSIDQTQKFQKIDIHNGGK).

It belongs to the gammacarmovirus double gene block protein 2 family.

The protein localises to the host endoplasmic reticulum membrane. In terms of biological role, required for cell-to-cell movement of virions in the host plant together with p7a. In Maize chlorotic mottle virus (isolate United States/Kansas/1987) (MCMV), this protein is p7b.